The chain runs to 235 residues: Orotidine 5'-phosphate decarboxylase (235 aa).

Residues Asp-10, Lys-33, 60 to 69 (DLKMHDIPNT), Thr-123, Arg-185, Gln-194, Gly-214, and Arg-215 contribute to the substrate site. Residue Lys-62 is the Proton donor of the active site.

The protein belongs to the OMP decarboxylase family. Type 1 subfamily. Homodimer.

It carries out the reaction orotidine 5'-phosphate + H(+) = UMP + CO2. It participates in pyrimidine metabolism; UMP biosynthesis via de novo pathway; UMP from orotate: step 2/2. In terms of biological role, catalyzes the decarboxylation of orotidine 5'-monophosphate (OMP) to uridine 5'-monophosphate (UMP). This Lactobacillus acidophilus (strain ATCC 700396 / NCK56 / N2 / NCFM) protein is Orotidine 5'-phosphate decarboxylase.